A 97-amino-acid polypeptide reads, in one-letter code: Apolipoprotein C-II (97 aa).

The first 22 residues, 1-22 (MGSRFFLALFLALLVLGNEVQG), serve as a signal peptide directing secretion. The segment at 63 to 71 (SVDEKLRDM) is lipid binding. The interval 75–97 (SSAAMTTYAGIFTDQLLTLLKGE) is lipoprotein lipase cofactor.

It belongs to the apolipoprotein C2 family. In terms of processing, proapolipoprotein C-II is synthesized as a sialic acid containing glycoprotein which is subsequently desialylated prior to its proteolytic processing. Proapolipoprotein C-II, the major form found in plasma undergoes proteolytic cleavage of its N-terminal hexapeptide to generate the mature form apolipoprotein C-II, which occurs as the minor form in plasma.

It is found in the secreted. In terms of biological role, component of chylomicrons, very low-density lipoproteins (VLDL), low-density lipoproteins (LDL), and high-density lipoproteins (HDL) in plasma. Plays an important role in lipoprotein metabolism as an activator of lipoprotein lipase. The polypeptide is Apolipoprotein C-II (Apoc2) (Rattus norvegicus (Rat)).